The chain runs to 495 residues: MGSVYVNFFEEYPDTSYIKIPNNPLDRVIGQDEAVRIASVAARQRRHLLLVGPPGVGKSMIAQALSFYIGRPNEEIRVVHNPQYPERPFVEIKTREEVMLEREEESSTSGTLIDPKDAPTSVAERLGYRCSKCGFYSSPTEMVCPNCNSPKAQIGTQGPFGDVFNVIGAAFGVQNNVDKVTLTRRNGDHDEIVVYERYNDKIRVLDEKTLERRRRLEKKSPSKTIVPIDRNPFVLATGASETELLGDVRHDPYGGHPQLGTLPYERVIAGAVHEAHEGVLFIDEITHLGNLQRYILTAMQEKVFPITGRNPQSAGASVRVDKVPADFILVAACNINDLPYILSPLRSRIVGNGYEILMKTTMKDTEENRMKYLQFIAQEINMDGKIPHMTMDAAQLIIEEGRKRAKLIDRKNNELTLRLRELGGLIRAAGDIAVFKGNKLIDKEDVEEAIKLYVPVEEKIMKEYGSMAAAYSSETTGSQRDSTYNYANMDDRSYE.

ATP is bound at residue 52–59 (GPPGVGKS). The tract at residues 471–495 (YSSETTGSQRDSTYNYANMDDRSYE) is disordered. Polar residues predominate over residues 472–486 (SSETTGSQRDSTYNY).

Belongs to the peptidase S16 family.

This is Putative lon protease homolog from Thermoplasma volcanium (strain ATCC 51530 / DSM 4299 / JCM 9571 / NBRC 15438 / GSS1).